Here is a 384-residue protein sequence, read N- to C-terminus: Substance-K receptor (384 aa).

At 1–32 (MGACVVMTDINISSGLDSNATGITAFSMPGWQ) the chain is on the extracellular side. Asn11 and Asn19 each carry an N-linked (GlcNAc...) asparagine glycan. The chain crosses the membrane as a helical span at residues 33-56 (LALWTAAYLALVLVAVMGNATVIW). Residues 57-69 (IILAHQRMRTVTN) are Cytoplasmic-facing. Residues 70–90 (YFIVNLALADLCMAAFNAAFN) traverse the membrane as a helical segment. Residues 91–107 (FVYASHNIWYFGRAFCY) lie on the Extracellular side of the membrane. An intrachain disulfide couples Cys106 to Cys181. Residues 108–129 (FQNLFPITAMFVSIYSMTAIAA) form a helical membrane-spanning segment. Residues 130–149 (DRYMAIVHPFQPRLSAPGTR) lie on the Cytoplasmic side of the membrane. The helical transmembrane segment at 150 to 170 (AVIAGIWLVALALAFPQCFYS) threads the bilayer. Over 171–196 (TITTDEGATKCVVAWPEDSGGKMLLL) the chain is Extracellular. A helical membrane pass occupies residues 197–218 (YHLIVIALIYFLPLVVMFVAYS). Residues 219 to 251 (VIGLTLWRRSVPGHQAHGANLRHLQAKKKFVKT) are Cytoplasmic-facing. The helical transmembrane segment at 252 to 272 (MVLVVVTFAICWLPYHLYFIL) threads the bilayer. Topologically, residues 273 to 290 (GTFQEDIYCHKFIQQVYL) are extracellular. The helical transmembrane segment at 291 to 310 (ALFWLAMSSTMYNPIIYCCL) threads the bilayer. Over 311-384 (NHRFRSGFRL…SPQAGVSTEP (74 aa)) the chain is Cytoplasmic. Cys324 is lipidated: S-palmitoyl cysteine.

It belongs to the G-protein coupled receptor 1 family.

Its subcellular location is the cell membrane. Its function is as follows. This is a receptor for the tachykinin neuropeptide substance K (neurokinin A). It is associated with G proteins that activate a phosphatidylinositol-calcium second messenger system. The rank order of affinity of this receptor to tachykinins is: substance K &gt; neuromedin-K &gt; substance P. The sequence is that of Substance-K receptor (TACR2) from Bos taurus (Bovine).